The following is a 365-amino-acid chain: MSAKRSIGDPEILKKRIPQNQKYQHVKTRLDTGNSMTKYMERIEEIKKNYRYKKDELFKRIKVSTFAQLVLQVASVSEERESGEMTADELQRLEDNSSVISDTEFLTDRPNGKGSPVSESKSPVQFIDSERGEEFIQTSRSTLQSVISGVGELDLGNQADKEKQSLPSSSALDKPYEDCPFLLLDVRDRDSYDQCHIVGARNYPTAMLSRTMNPFTSEILEYRNAHGKIIILYDEDERIASQAATTMCERGFENLFMLSGGLKVISQKFPQGLTTGSFPSTCLAPPTQTKSALKRTPRDPIVPAENKWRFSSQDLEIIENHVENMLMSTSTPSRLRLDSRNSKVPSSASSARSLSSTSSHSKPWK.

Basic and acidic residues predominate over residues 1 to 14; it reads MSAKRSIGDPEILK. 2 disordered regions span residues 1 to 23 and 104 to 123; these read MSAK…NQKY and EFLT…SKSP. In terms of domain architecture, Rhodanese spans 177–274; the sequence is EDCPFLLLDV…ISQKFPQGLT (98 aa). Residues 329–365 form a disordered region; sequence TSTPSRLRLDSRNSKVPSSASSARSLSSTSSHSKPWK. A compositionally biased stretch (low complexity) spans 342–365; sequence SKVPSSASSARSLSSTSSHSKPWK.

The protein belongs to the CEP41 family.

It localises to the cytoplasm. The protein resides in the cytoskeleton. It is found in the microtubule organizing center. The protein localises to the centrosome. Its subcellular location is the cell projection. It localises to the cilium. The protein resides in the cilium basal body. Required during ciliogenesis for tubulin glutamylation in cilium. Probably acts by participating in the transport of tubulin polyglutamylases between the basal body and the cilium. The polypeptide is Centrosomal protein of 41 kDa B (cep41-b) (Xenopus laevis (African clawed frog)).